The sequence spans 313 residues: Dioxygenase swnH2 (313 aa).

Fe cation is bound by residues His-155, Asp-157, and His-232.

This sequence belongs to the PhyH family. Homodimer. It depends on Fe cation as a cofactor.

It functions in the pathway mycotoxin biosynthesis. Its function is as follows. Aminotransferase; part of the gene cluster that mediates the biosynthesis of swainsonine (SW), a cytotoxic fungal alkaloid and a potential cancer therapy drug. Swainsonine production occurs via a multibranched pathway and is dispensable for fungal colonization of plants and infection of insect hosts. The first step of swainsonine biosynthesis is the production of the precursor pipecolic acid (PA) via conversion of L-lysine (Lys) to 1-piperideine-6-carboxylate (P6C) by the aminotransferase swnA, the latter being further reduced to PA by the reductase swnR. The PKS-NRPS hybrid synthetase swnK uptakes and condensates PA and malonyl-CoA with and without skipping of the ketoreductase (KR) domain in order to produce 3 intermediates, 1-oxoindolizidine, (1S)-1-hydroxyindolizin, and (1R)-1-hydroxyindolizine; with the transisomer (1S)-1-hydroxyindolizin being predominant. The terminal thioester reductase (TE) domain of swnK is involved in reduction of the thioester bond to release the intermediate aldehydes. The oxidoreductase swnN could contribute to the reduction of 1-oxoindolizidine to (1S)-1-hydroxyindolizin and (1R)-1-hydroxyindolizine, contributing to the major route of SW production. The dioxygenase swnH2 would be responsible for the oxidization of (1R)-1-hydroxyindolizine into (1R,2S)-1,2-dihydroxyindolizine and of (1S)-1-hydroxyindolizin to yield both (1R,2S)-1,2-dihydroxyindolizine and (1S,2S)-1,2-dihydroxyindolizine. The dioxygenase swnH1 then performs the conversion of the 1,2-dihydroxyindolizine epimers to SW. This Arthroderma benhamiae (strain ATCC MYA-4681 / CBS 112371) (Trichophyton mentagrophytes) protein is Dioxygenase swnH2.